The primary structure comprises 166 residues: Large ribosomal subunit protein uL10 (166 aa).

This sequence belongs to the universal ribosomal protein uL10 family. Part of the ribosomal stalk of the 50S ribosomal subunit. The N-terminus interacts with L11 and the large rRNA to form the base of the stalk. The C-terminus forms an elongated spine to which L12 dimers bind in a sequential fashion forming a multimeric L10(L12)X complex.

In terms of biological role, forms part of the ribosomal stalk, playing a central role in the interaction of the ribosome with GTP-bound translation factors. The protein is Large ribosomal subunit protein uL10 of Shewanella sediminis (strain HAW-EB3).